Consider the following 311-residue polypeptide: Malate dehydrogenase (311 aa).

NAD(+) is bound by residues 7 to 13 (GAAGGIG) and Asp34. The substrate site is built by Arg81 and Arg87. Residues Asn94 and 117–119 (ITN) contribute to the NAD(+) site. 2 residues coordinate substrate: Asn119 and Arg153. The Proton acceptor role is filled by His177. An NAD(+)-binding site is contributed by Met227.

Belongs to the LDH/MDH superfamily. MDH type 1 family. As to quaternary structure, homodimer.

It carries out the reaction (S)-malate + NAD(+) = oxaloacetate + NADH + H(+). Catalyzes the reversible oxidation of malate to oxaloacetate. The polypeptide is Malate dehydrogenase (Shewanella woodyi (strain ATCC 51908 / MS32)).